The chain runs to 404 residues: Cysteine desulfurase IscS (404 aa).

Residues 75 to 76 (AT), Asn-155, Gln-183, and 203 to 205 (SGH) contribute to the pyridoxal 5'-phosphate site. Position 206 is an N6-(pyridoxal phosphate)lysine (Lys-206). Thr-243 lines the pyridoxal 5'-phosphate pocket. The Cysteine persulfide intermediate role is filled by Cys-328. A [2Fe-2S] cluster-binding site is contributed by Cys-328.

It belongs to the class-V pyridoxal-phosphate-dependent aminotransferase family. NifS/IscS subfamily. In terms of assembly, homodimer. Forms a heterotetramer with IscU, interacts with other sulfur acceptors. Pyridoxal 5'-phosphate is required as a cofactor.

The protein resides in the cytoplasm. It catalyses the reaction (sulfur carrier)-H + L-cysteine = (sulfur carrier)-SH + L-alanine. Its pathway is cofactor biosynthesis; iron-sulfur cluster biosynthesis. Its function is as follows. Master enzyme that delivers sulfur to a number of partners involved in Fe-S cluster assembly, tRNA modification or cofactor biosynthesis. Catalyzes the removal of elemental sulfur atoms from cysteine to produce alanine. Functions as a sulfur delivery protein for Fe-S cluster synthesis onto IscU, an Fe-S scaffold assembly protein, as well as other S acceptor proteins. This chain is Cysteine desulfurase IscS, found in Mannheimia succiniciproducens (strain KCTC 0769BP / MBEL55E).